We begin with the raw amino-acid sequence, 228 residues long: Hematopoietically-expressed homeobox protein hhex (228 aa).

A DNA-binding region (homeobox) is located at residues 117–176 (RKGGQVRFSNDQTIELEKKFETQKYLSPPERKRLAKMLQLSERQVKTWFQNRRAKWRRLK). The disordered stretch occupies residues 175-228 (LKQENPPSTGKREAEDSDTRRLSDAAARARELESGASTDSEELLDIEDEHQFTL). Positions 184 to 207 (GKREAEDSDTRRLSDAAARARELE) are enriched in basic and acidic residues. Acidic residues predominate over residues 213–222 (DSEELLDIED).

Expressed in embryonic endothelial and blood lineages. From late-blastula stage, expression is restricted to the dorsal marginal region of the extraembryonic yolk syncytial layer (YSL). By the onset of gastrulation, expressed in the entire dorsal half of the YSL. Post-gastrulation, expression appears in both anterior and posterior lateral plate mesoderm by the 3-somite stage. Posteriorly, expression is in the intermediate cell mass (ICM), which contains both endothelial and blood precursors. Subsequently expressed in the developing endothelial cells including the endocardium until the onset of circulation (24 hpf) and disappears completely by 30 hpf, at which point expression is seen in the thyroid and liver primordia. Also expressed in the developing biliary tree and pancreas.

It localises to the nucleus. In terms of biological role, recognizes the DNA sequence 5'-ATTAA-3'. Transcriptional repressor. Regulates the differentiation of both endothelial and blood cells. Plays a role in embryonic dorsoventral patterning by regulating bmp expression. May establish anterior identity. Functions in the embryo to regulate liver development. Functions extraembryonically to generate organ chirality. The polypeptide is Hematopoietically-expressed homeobox protein hhex (Danio rerio (Zebrafish)).